A 151-amino-acid polypeptide reads, in one-letter code: Myosin catalytic light chain, smooth muscle (151 aa).

Ala-1 carries the N-acetylalanine modification. EF-hand domains lie at 6-41 (DRITECQEAFELFDRSAEGKVFLGQVGDILRALGQN), 83-118 (GSYEDFVEGLRVFDKENNGKIMGAELRHVLSTLGEK), and 119-151 (MSEEEVEESLLQGQQDPNGCIHYEEFSKYLLEG).

In molluscan muscle, calcium regulation is associated with myosin rather than with actin. Muscle myosin contains two types of light chains: the catalytic light chain, essential for ATPase activity, and the regulatory light chain, a calcium-binding protein responsible for Ca(2+) dependent binding and Ca(2+) dependent Mg-ATPase activity. The protein is Myosin catalytic light chain, smooth muscle of Halocynthia roretzi (Sea squirt).